The chain runs to 469 residues: 2-amino-4-ketopentanoate thiolase beta subunit (469 aa).

An N6-(pyridoxal phosphate)lysine modification is found at Lys102. Pyridoxal 5'-phosphate contacts are provided by residues Asn128 and 238–242 (AGGGN).

This sequence belongs to the threonine synthase family. As to quaternary structure, heterodimer with OrtA. The cofactor is pyridoxal 5'-phosphate.

It carries out the reaction D-alanine + acetyl-CoA = (2R)-2-amino-4-oxopentanoate + CoA. With respect to regulation, completely inhibited by p-chloromercuribenzoate (p-ClHgBzO) and acetyl-CoA, and partially inhibited by N-ethylmaleimide. In terms of biological role, involved in the ornithine fermentation pathway. Catalyzes the thiolytic cleavage of 2-amino-4-ketopentanoate (AKP) with coenzyme A (CoA) to form acetyl-CoA and alanine. It is strictly specific for AKP. This is 2-amino-4-ketopentanoate thiolase beta subunit from Acetoanaerobium sticklandii (strain ATCC 12662 / DSM 519 / JCM 1433 / CCUG 9281 / NCIMB 10654 / HF) (Clostridium sticklandii).